The following is a 692-amino-acid chain: Elongation factor G (692 aa).

The region spanning 8-282 (ENTRNIGIMA…AVIDYLPSPL (275 aa)) is the tr-type G domain. Residues 17–24 (AHIDAGKT), 81–85 (DTPGH), and 135–138 (NKMD) each bind GTP.

It belongs to the TRAFAC class translation factor GTPase superfamily. Classic translation factor GTPase family. EF-G/EF-2 subfamily.

It localises to the cytoplasm. Functionally, catalyzes the GTP-dependent ribosomal translocation step during translation elongation. During this step, the ribosome changes from the pre-translocational (PRE) to the post-translocational (POST) state as the newly formed A-site-bound peptidyl-tRNA and P-site-bound deacylated tRNA move to the P and E sites, respectively. Catalyzes the coordinated movement of the two tRNA molecules, the mRNA and conformational changes in the ribosome. The polypeptide is Elongation factor G (Bacillus cereus (strain Q1)).